The sequence spans 337 residues: Phosphoribosylformylglycinamidine cyclo-ligase (337 aa).

Belongs to the AIR synthase family.

It is found in the cytoplasm. It catalyses the reaction 2-formamido-N(1)-(5-O-phospho-beta-D-ribosyl)acetamidine + ATP = 5-amino-1-(5-phospho-beta-D-ribosyl)imidazole + ADP + phosphate + H(+). Its pathway is purine metabolism; IMP biosynthesis via de novo pathway; 5-amino-1-(5-phospho-D-ribosyl)imidazole from N(2)-formyl-N(1)-(5-phospho-D-ribosyl)glycinamide: step 2/2. This is Phosphoribosylformylglycinamidine cyclo-ligase from Pseudothermotoga lettingae (strain ATCC BAA-301 / DSM 14385 / NBRC 107922 / TMO) (Thermotoga lettingae).